A 321-amino-acid polypeptide reads, in one-letter code: Putative ankyrin repeat domain-containing protein 26-like protein (321 aa).

ANK repeat units lie at residues 48-78, 82-111, 115-144, 148-177, and 181-210; these read KHLG…DLDE, KKRT…QLDV, KNRT…DPDL, YGNT…NIES, and DELT…NLTA. Disordered regions lie at residues 222-242 and 268-321; these read EYKE…GTSN and FNKP…NENI. The segment covering 229-242 has biased composition (polar residues); that stretch reads PRNPQNSNPEGTSN.

This chain is Putative ankyrin repeat domain-containing protein 26-like protein (ANKRD26P1), found in Homo sapiens (Human).